A 587-amino-acid chain; its full sequence is Solute carrier family 13 member 2 (587 aa).

The next 4 membrane-spanning stretches (helical) occupy residues 13–33 (FYLIVLCLPIFLLPLPLIVQT), 53–73 (ALPLAVTALFPIVLFPLMGIM), 86–106 (TNILFVGGLMVAIAVEHWNLH), and 136–156 (SMWISNTATTAMMVPIGHAVL). The disordered stretch occupies residues 188–208 (KLDNGQPVSAPSEPRTQKTQE). The next 8 helical transmembrane spans lie at 264–284 (FAFPTMIILLLLAWLWLQVLF), 329–349 (VLFVLLVVLWFTREPGFFPGW), 367–387 (TVAIFISLVMFIIPSKIPGLM), 407–427 (TVNDKMPWNIVILLGGGFALA), 445–465 (PLQHIPPSATAVILCLLIAIF), 477–497 (LFLPILASMAQAICLHPLYVM), 506–526 (LAFMLPVATPPNAIVFSFGGL), and 535–555 (GFLLNIIGVLAITLSINSWSI).

Belongs to the SLC13A/DASS transporter (TC 2.A.47) family. NADC subfamily. As to expression, expressed in large and small intestine and in the kidney proximal tubules.

It is found in the apical cell membrane. It carries out the reaction succinate(out) + 3 Na(+)(out) = succinate(in) + 3 Na(+)(in). The catalysed reaction is fumarate(out) + 3 Na(+)(out) = fumarate(in) + 3 Na(+)(in). It catalyses the reaction 2-oxoglutarate(out) + 3 Na(+)(out) = 2-oxoglutarate(in) + 3 Na(+)(in). With respect to regulation, li(+) decreases succinate transport in the presence of Na(+), by competing at one of the three cation binding sites. In terms of biological role, low-affinity sodium-dicarboxylate cotransporter, that mediates the entry of citric acid cycle intermediates, such as succinate, citrate, fumarate and alpha-ketoglutarate (2-oxoglutarate) into the small intestine and renal proximal tubule. Transports the dicarboxylate into the cell with a probable stoichiometry of 3 Na(+) for 1 divalent dicarboxylate, rendering the process electrogenic. Citrate is transported in protonated form as a divalent anion, rather than the trivalent form which is normally found in blood. Has a critical role in renal dicarboxylate transport. In Rattus norvegicus (Rat), this protein is Solute carrier family 13 member 2 (Slc13a2).